The primary structure comprises 229 residues: MGQKVNPIGLRLGINRNWESRWFPDFNKMPERVEEDNKIRKFLKKELYYAGISNIIIERTAKKLRVTIVAARPGIIIGKKGADIEKLKQKLQKLVGKEVFINIKEEKRPQASAQLAAENVATQLERRVAFRRAMKKVIQAAQKAGVKGIKVQVAGRLGGAEMARTEWYLEGRVPLHTLRAKIDYGFAEAHTTYGVIGVKVWIFKGEVLQKGIRPEPTERPRRRAPRRRS.

A KH type-2 domain is found at 39–107 (IRKFLKKELY…EVFINIKEEK (69 aa)).

The protein belongs to the universal ribosomal protein uS3 family. Part of the 30S ribosomal subunit. Forms a tight complex with proteins S10 and S14.

Functionally, binds the lower part of the 30S subunit head. Binds mRNA in the 70S ribosome, positioning it for translation. The sequence is that of Small ribosomal subunit protein uS3 from Nitratiruptor sp. (strain SB155-2).